Consider the following 481-residue polypeptide: Zinc metalloproteinase/disintegrin (481 aa).

Positions 1 to 20 (MIEVLLVTICLAVFPYQGSS) are cleaved as a signal peptide. Positions 21–189 (IILESGNVND…KKASQLYLTP (169 aa)) are excised as a propeptide. The residue at position 190 (glutamate 190) is a Pyrrolidone carboxylic acid (Glu). The Peptidase M12B domain maps to 197 to 392 (RYIKLAIVVD…DNPQCILNAP (196 aa)). 296 to 299 (RNTI) contacts an L-amino acid tripeptide. Cystine bridges form between cysteine 308–cysteine 387, cysteine 349–cysteine 371, and cysteine 351–cysteine 354. Histidine 333 lines the Zn(2+) pocket. The active site involves glutamate 334. Histidine 337 and histidine 343 together coordinate Zn(2+). Serine 357 serves as a coordination point for an L-amino acid tripeptide. Residues 393 to 410 (LRTDTVSTPVSGNEFLEA) constitute a propeptide that is removed on maturation. One can recognise a Disintegrin domain in the interval 400-481 (TPVSGNEFLE…ADCPRNGLYG (82 aa)). Cystine bridges form between cysteine 414–cysteine 429, cysteine 416–cysteine 424, cysteine 423–cysteine 446, cysteine 437–cysteine 443, cysteine 442–cysteine 467, and cysteine 455–cysteine 474. The short motif at 459–461 (RGD) is the Cell attachment site element.

It belongs to the venom metalloproteinase (M12B) family. P-II subfamily. P-IIa sub-subfamily. Monomer. Requires Zn(2+) as cofactor. The N-terminus is blocked. As to expression, expressed by the venom gland.

It localises to the secreted. With respect to regulation, inhibited by EDTA and 1,10-phenanthroline. Is also inhibited by endogenous tripeptide inhibitors pyroGlu-Asn-Trp, pyroGlu-Gln-Trp, and pyroGlu-Lys-Trp. In terms of biological role, potent fibrinogenolytic protease which cleaves mainly the Aalpha chain of fibrinogen (FGA) and slightly the Bbeta (FGB) and the gamma (FGG) chains. May possess hemorrhagic activity. Compared to other SVMP, the substrate-binding pocket is relatively shallow. Is less susceptible to tripeptide inhibitors than TM-1 (AC U3KRG1) and TM-2. Functionally, inhibits platelet aggregation induced by ADP, thrombin, platelet-activating factor and collagen. Acts by inhibiting fibrinogen interaction with platelet receptors GPIIb/GPIIIa (ITGA2B/ITGB3). The sequence is that of Zinc metalloproteinase/disintegrin from Protobothrops mucrosquamatus (Taiwan habu).